The following is a 68-amino-acid chain: Large ribosomal subunit protein uL29 (68 aa).

It belongs to the universal ribosomal protein uL29 family.

The polypeptide is Large ribosomal subunit protein uL29 (Nitrobacter winogradskyi (strain ATCC 25391 / DSM 10237 / CIP 104748 / NCIMB 11846 / Nb-255)).